The sequence spans 789 residues: Glycerol-3-phosphate acyltransferase (789 aa).

The HXXXXD motif signature appears at 276-281; the sequence is HRSYID.

This sequence belongs to the GPAT/DAPAT family.

It localises to the cell membrane. It carries out the reaction sn-glycerol 3-phosphate + an acyl-CoA = a 1-acyl-sn-glycero-3-phosphate + CoA. It participates in phospholipid metabolism; CDP-diacylglycerol biosynthesis; CDP-diacylglycerol from sn-glycerol 3-phosphate: step 1/3. This Mycobacterium tuberculosis (strain CDC 1551 / Oshkosh) protein is Glycerol-3-phosphate acyltransferase (plsB).